We begin with the raw amino-acid sequence, 387 residues long: Involucrin (387 aa).

Disordered stretches follow at residues 1–319 and 347–387; these read MSQQ…VHLG and VCIP…LKQE. Over residues 28-37 the composition is skewed to polar residues; that stretch reads NTQQDQMKQP. Over residues 62 to 71 the composition is skewed to low complexity; that stretch reads QVPEQECEPQ. 4 stretches are compositionally biased toward basic and acidic residues: residues 85–96, 104–115, 147–179, and 231–245; these read KQQEPQEQEVHP, QEQEAHLGKKQE, QEVH…KQLQ, and QLEK…ELHL.

It belongs to the involucrin family. As to quaternary structure, directly or indirectly cross-linked to cornifelin (CNFN). In terms of processing, substrate of transglutaminase. Specific glutamines or lysines are cross-linked to keratins, desmoplakin and to inter involucrin molecules. Keratinocytes of epidermis and other stratified squamous epithelia.

The protein localises to the cytoplasm. Functionally, part of the insoluble cornified cell envelope (CE) of stratified squamous epithelia. The sequence is that of Involucrin (IVL) from Cephalopachus bancanus (Western tarsier).